Consider the following 426-residue polypeptide: Tol-Pal system protein TolB (426 aa).

The first 24 residues, 1-24 (MKLKSRFTSIIGVITLFFSQTVTA), serve as a signal peptide directing secretion.

This sequence belongs to the TolB family. In terms of assembly, the Tol-Pal system is composed of five core proteins: the inner membrane proteins TolA, TolQ and TolR, the periplasmic protein TolB and the outer membrane protein Pal. They form a network linking the inner and outer membranes and the peptidoglycan layer.

The protein localises to the periplasm. Its function is as follows. Part of the Tol-Pal system, which plays a role in outer membrane invagination during cell division and is important for maintaining outer membrane integrity. The polypeptide is Tol-Pal system protein TolB (Actinobacillus pleuropneumoniae serotype 5b (strain L20)).